The primary structure comprises 97 residues: Protein RnfH (97 aa).

It belongs to the UPF0125 (RnfH) family.

The chain is Protein RnfH from Aliivibrio salmonicida (strain LFI1238) (Vibrio salmonicida (strain LFI1238)).